A 370-amino-acid chain; its full sequence is tRNA-specific 2-thiouridylase MnmA (370 aa).

ATP contacts are provided by residues glycine 9–serine 16 and methionine 35. The segment at asparagine 95–aspartate 97 is interaction with target base in tRNA. Cysteine 100 functions as the Nucleophile in the catalytic mechanism. A disulfide bond links cysteine 100 and cysteine 196. Glycine 124 contributes to the ATP binding site. The interaction with tRNA stretch occupies residues lysine 146 to glutamine 148. Cysteine 196 acts as the Cysteine persulfide intermediate in catalysis. Residues arginine 308–tyrosine 309 form an interaction with tRNA region.

It belongs to the MnmA/TRMU family.

It is found in the cytoplasm. It carries out the reaction S-sulfanyl-L-cysteinyl-[protein] + uridine(34) in tRNA + AH2 + ATP = 2-thiouridine(34) in tRNA + L-cysteinyl-[protein] + A + AMP + diphosphate + H(+). In terms of biological role, catalyzes the 2-thiolation of uridine at the wobble position (U34) of tRNA, leading to the formation of s(2)U34. This chain is tRNA-specific 2-thiouridylase MnmA, found in Ralstonia nicotianae (strain ATCC BAA-1114 / GMI1000) (Ralstonia solanacearum).